The primary structure comprises 202 residues: Probable GTP-binding protein EngB (202 aa).

The EngB-type G domain occupies Asn-30–Ser-201. Residues Gly-38 to Ser-45, Gly-65 to Ser-69, Asp-84 to Gly-87, Thr-151 to Asp-154, and Val-180 to Ser-182 each bind GTP. Mg(2+) contacts are provided by Ser-45 and Thr-67.

This sequence belongs to the TRAFAC class TrmE-Era-EngA-EngB-Septin-like GTPase superfamily. EngB GTPase family. It depends on Mg(2+) as a cofactor.

Necessary for normal cell division and for the maintenance of normal septation. The sequence is that of Probable GTP-binding protein EngB from Lawsonia intracellularis (strain PHE/MN1-00).